Reading from the N-terminus, the 508-residue chain is Monocarboxylate transporter 9 (508 aa).

6 consecutive transmembrane segments (helical) span residues Trp13 to Val33, Trp53 to Val73, Pro80 to Pro100, Ile102 to Thr122, Gly137 to Leu157, and Phe164 to Cys184. A disordered region spans residues Gly242 to Pro263. 6 helical membrane passes run Val303–Leu323, Ile341–Leu361, Leu370–Ala390, Leu396–Val416, Gly431–Phe451, and Ile460–Ile480.

Belongs to the major facilitator superfamily. Monocarboxylate porter (TC 2.A.1.13) family. In terms of tissue distribution, expressed in the liver and kidneys. In the liver localizes on the sinusoidal membrane of the hepatocytes.

It localises to the cell membrane. It catalyses the reaction creatine(in) = creatine(out). It carries out the reaction (R)-carnitine(in) = (R)-carnitine(out). In terms of biological role, extracellular pH-and Na(+)-sensitive low-affinity creatine transporter. Also functions as a pH-independent carnitine efflux transporter. The sequence is that of Monocarboxylate transporter 9 (Slc16a9) from Rattus norvegicus (Rat).